Reading from the N-terminus, the 400-residue chain is Tektin-B1 (400 aa).

Coiled coils occupy residues 35 to 81 (TRLS…AKAL), 236 to 294 (FALR…LENR), and 310 to 353 (GLVN…LELK).

It belongs to the tektin family. As to quaternary structure, may form a heterodimer with tektin a or exist as a homodimer. As to expression, cilia and flagella.

The protein resides in the cytoplasm. It is found in the cytoskeleton. In terms of biological role, structural component of ciliary and flagellar microtubules. The chain is Tektin-B1 from Strongylocentrotus purpuratus (Purple sea urchin).